The chain runs to 1398 residues: DNA topoisomerase 2 (1398 aa).

ATP is bound by residues Asn-69, Asn-103, 131–133 (SDN), and 144–151 (GRNGFGAK). Positions 260 to 317 (NSNDNKNNKGQNDNNNNNNNNNDENANQNNDNLDVSLSNEPADGTPTKNNNNNNNNND) are disordered. Over residues 267-291 (NKGQNDNNNNNNNNNDENANQNNDN) the composition is skewed to low complexity. 411–413 (QTK) contacts ATP. The region spanning 493-608 (CTLILTEGDS…SLLKHKGFLS (116 aa)) is the Toprim domain. Glu-499, Asp-577, and Asp-579 together coordinate Mg(2+). Residues 739–1191 (IPNIMDGWKP…TVETMWLKDI (453 aa)) form the Topo IIA-type catalytic domain. Residue Tyr-830 is the O-(5'-phospho-DNA)-tyrosine intermediate of the active site. Residues 1012–1021 (KLKSTLTTTN) form an interaction with DNA region. 2 disordered regions span residues 1214 to 1250 (KFKVARKQGPSSMKKKKKKKKLSSDEESEGGDTSDSS) and 1262 to 1361 (NTNK…NSSI). The segment covering 1262–1276 (NTNKKTTTSSNNVNN) has biased composition (low complexity). 2 stretches are compositionally biased toward polar residues: residues 1287–1300 (LNSNELDNTLSVSK) and 1348–1357 (DSTNDNNSEL).

It belongs to the type II topoisomerase family. Homodimer. Mg(2+) is required as a cofactor. The cofactor is Mn(2+). Ca(2+) serves as cofactor.

Its subcellular location is the nucleus. It carries out the reaction ATP-dependent breakage, passage and rejoining of double-stranded DNA.. Functionally, control of topological states of DNA by transient breakage and subsequent rejoining of DNA strands. Topoisomerase II makes double-strand breaks. This Plasmodium falciparum (isolate K1 / Thailand) protein is DNA topoisomerase 2 (TOP2).